The sequence spans 246 residues: Flagellar L-ring protein (246 aa).

Positions 1-20 are cleaved as a signal peptide; that stretch reads MMQKCLSPKTLIAALVVLSA. Residue Cys21 is the site of N-palmitoyl cysteine attachment. Cys21 is lipidated: S-diacylglycerol cysteine.

It belongs to the FlgH family. In terms of assembly, the basal body constitutes a major portion of the flagellar organelle and consists of four rings (L,P,S, and M) mounted on a central rod.

The protein localises to the cell outer membrane. Its subcellular location is the bacterial flagellum basal body. In terms of biological role, assembles around the rod to form the L-ring and probably protects the motor/basal body from shearing forces during rotation. This chain is Flagellar L-ring protein, found in Ruegeria pomeroyi (strain ATCC 700808 / DSM 15171 / DSS-3) (Silicibacter pomeroyi).